A 403-amino-acid polypeptide reads, in one-letter code: G2/mitotic-specific cyclin-B1 (403 aa).

Belongs to the cyclin family. Cyclin AB subfamily. As to quaternary structure, interacts with the CDC2 protein kinase to form a serine/threonine kinase holoenzyme complex also known as maturation promoting factor (MPF). The cyclin subunit imparts substrate specificity to the complex.

Its function is as follows. Essential for the control of the cell cycle at the G2/M (mitosis) transition. This chain is G2/mitotic-specific cyclin-B1 (ccnb1), found in Anguilla japonica (Japanese eel).